The sequence spans 360 residues: Lipid-A-disaccharide synthase (360 aa).

It belongs to the LpxB family.

It carries out the reaction a lipid X + a UDP-2-N,3-O-bis[(3R)-3-hydroxyacyl]-alpha-D-glucosamine = a lipid A disaccharide + UDP + H(+). It participates in bacterial outer membrane biogenesis; LPS lipid A biosynthesis. Its function is as follows. Condensation of UDP-2,3-diacylglucosamine and 2,3-diacylglucosamine-1-phosphate to form lipid A disaccharide, a precursor of lipid A, a phosphorylated glycolipid that anchors the lipopolysaccharide to the outer membrane of the cell. This chain is Lipid-A-disaccharide synthase, found in Helicobacter acinonychis (strain Sheeba).